A 517-amino-acid polypeptide reads, in one-letter code: Golgi-associated kinase 1B (517 aa).

Residues 1–36 are Cytoplasmic-facing; that stretch reads MTCPDKPGQLVNWFVCSLCAPRVCKLWSSRRPRTRR. Residues 37 to 56 traverse the membrane as a helical; Signal-anchor for type II membrane protein segment; sequence NLLLGTACAIYLGFLVSQVG. At 57–517 the chain is on the extracellular side; sequence RGSFQHGQAT…HGARVLPMNE (461 aa). N-linked (GlcNAc...) asparagine glycosylation is found at Asn98 and Asn287.

It belongs to the GASK family.

The protein resides in the golgi apparatus membrane. This is Golgi-associated kinase 1B from Mus musculus (Mouse).